A 143-amino-acid chain; its full sequence is Heat shock protein Hsp-16.48/Hsp-16.49 (143 aa).

One can recognise a sHSP domain in the interval 35 to 140 (HNSFNFSDNI…SSRSIPINFV (106 aa)).

It belongs to the small heat shock protein (HSP20) family.

The polypeptide is Heat shock protein Hsp-16.48/Hsp-16.49 (hsp-16.48) (Caenorhabditis elegans).